Consider the following 127-residue polypeptide: Longitudinals lacking protein-like (127 aa).

A BTB domain is found at 33-98 (TDVTLACEGQ…MYAGEVNVSQ (66 aa)).

As to quaternary structure, the BTB domain interacts with the BTB domain of Trl in vitro. Found in a Pc-containing complex.

It localises to the nucleus. In terms of biological role, required, together with Trl, for maintaining the repressed state of target genes including homeotic genes Scr and Ubx. May also be involved in the activation of homeotic genes. Binds to a DNA Polycomb response element (PRE) at the bithorax complex. Also binds to polytene chromosomes at several hundred sites, many of which are shared with Trl and ph-p. Required during embryonic development. This Drosophila melanogaster (Fruit fly) protein is Longitudinals lacking protein-like.